We begin with the raw amino-acid sequence, 534 residues long: Cytochrome P450 714B1 (534 aa).

A topological domain (lumenal) is located at residue Met1. A helical; Signal-anchor for type III membrane protein membrane pass occupies residues 2–22; it reads VVVVAAAMAAASLCCGVAAYL. Over 23–534 the chain is Cytoplasmic; sequence YYVLWLAPER…RSKCDWAGFD (512 aa). Cys472 serves as a coordination point for heme.

This sequence belongs to the cytochrome P450 family. Heme is required as a cofactor. As to expression, highly expressed in spikelet and uppermost internode. Detected in shoots, roots, leaves and anthers.

The protein resides in the membrane. Its function is as follows. Catalyzes the 13-hydroxylation of gibberellins (GAs). Determines the ratio of GA4 and GA1. Converts GA12 into GA53. The sequence is that of Cytochrome P450 714B1 (CYP714B1) from Oryza sativa subsp. japonica (Rice).